The chain runs to 601 residues: Jacalin-related lectin 3 (601 aa).

3 Jacalin-type lectin domains span residues Pro-13–Pro-155, Ala-240–Glu-382, and Pro-438–His-583.

It belongs to the jacalin lectin family.

The polypeptide is Jacalin-related lectin 3 (JAL3) (Arabidopsis thaliana (Mouse-ear cress)).